The following is a 152-amino-acid chain: Deoxyuridine 5'-triphosphate nucleotidohydrolase (152 aa).

Substrate is bound by residues 71–73 (RSG), Asn84, 88–90 (LID), and Met98.

It belongs to the dUTPase family. Requires Mg(2+) as cofactor.

It carries out the reaction dUTP + H2O = dUMP + diphosphate + H(+). It participates in pyrimidine metabolism; dUMP biosynthesis; dUMP from dCTP (dUTP route): step 2/2. In terms of biological role, this enzyme is involved in nucleotide metabolism: it produces dUMP, the immediate precursor of thymidine nucleotides and it decreases the intracellular concentration of dUTP so that uracil cannot be incorporated into DNA. In Salmonella agona (strain SL483), this protein is Deoxyuridine 5'-triphosphate nucleotidohydrolase.